The primary structure comprises 178 residues: Crossover junction endodeoxyribonuclease RuvC (178 aa).

Active-site residues include D11, E71, and D143. Residues D11, E71, and D143 each contribute to the Mg(2+) site.

It belongs to the RuvC family. In terms of assembly, homodimer which binds Holliday junction (HJ) DNA. The HJ becomes 2-fold symmetrical on binding to RuvC with unstacked arms; it has a different conformation from HJ DNA in complex with RuvA. In the full resolvosome a probable DNA-RuvA(4)-RuvB(12)-RuvC(2) complex forms which resolves the HJ. It depends on Mg(2+) as a cofactor.

It localises to the cytoplasm. The catalysed reaction is Endonucleolytic cleavage at a junction such as a reciprocal single-stranded crossover between two homologous DNA duplexes (Holliday junction).. The RuvA-RuvB-RuvC complex processes Holliday junction (HJ) DNA during genetic recombination and DNA repair. Endonuclease that resolves HJ intermediates. Cleaves cruciform DNA by making single-stranded nicks across the HJ at symmetrical positions within the homologous arms, yielding a 5'-phosphate and a 3'-hydroxyl group; requires a central core of homology in the junction. The consensus cleavage sequence is 5'-(A/T)TT(C/G)-3'. Cleavage occurs on the 3'-side of the TT dinucleotide at the point of strand exchange. HJ branch migration catalyzed by RuvA-RuvB allows RuvC to scan DNA until it finds its consensus sequence, where it cleaves and resolves the cruciform DNA. This Neisseria meningitidis serogroup A / serotype 4A (strain DSM 15465 / Z2491) protein is Crossover junction endodeoxyribonuclease RuvC.